The chain runs to 702 residues: Elongation factor G (702 aa).

The 279-residue stretch at 8–286 (DKVRNIGIIA…AVVEYLPSPL (279 aa)) folds into the tr-type G domain. GTP contacts are provided by residues 17–24 (AHIDAGKT), 85–89 (DTPGH), and 139–142 (NKMD).

Belongs to the TRAFAC class translation factor GTPase superfamily. Classic translation factor GTPase family. EF-G/EF-2 subfamily.

The protein localises to the cytoplasm. Functionally, catalyzes the GTP-dependent ribosomal translocation step during translation elongation. During this step, the ribosome changes from the pre-translocational (PRE) to the post-translocational (POST) state as the newly formed A-site-bound peptidyl-tRNA and P-site-bound deacylated tRNA move to the P and E sites, respectively. Catalyzes the coordinated movement of the two tRNA molecules, the mRNA and conformational changes in the ribosome. This chain is Elongation factor G, found in Chloroflexus aurantiacus (strain ATCC 29366 / DSM 635 / J-10-fl).